The sequence spans 375 residues: DNA replication and repair protein RecF (375 aa).

ATP is bound at residue 30–37; sequence GNNAQGKS.

It belongs to the RecF family.

The protein resides in the cytoplasm. The RecF protein is involved in DNA metabolism; it is required for DNA replication and normal SOS inducibility. RecF binds preferentially to single-stranded, linear DNA. It also seems to bind ATP. The chain is DNA replication and repair protein RecF from Microcystis aeruginosa (strain NIES-843 / IAM M-2473).